Reading from the N-terminus, the 241-residue chain is Small ribosomal subunit protein uS3 (241 aa).

In terms of domain architecture, KH type-2 spans 39-107 (IREILHKELK…DVVINIVEIR (69 aa)). The interval 217 to 241 (KRMAEGETGGGGDRGGRQRRDNAAV) is disordered. Residues 230 to 241 (RGGRQRRDNAAV) are compositionally biased toward basic and acidic residues.

The protein belongs to the universal ribosomal protein uS3 family. As to quaternary structure, part of the 30S ribosomal subunit. Forms a tight complex with proteins S10 and S14.

Functionally, binds the lower part of the 30S subunit head. Binds mRNA in the 70S ribosome, positioning it for translation. In Bradyrhizobium diazoefficiens (strain JCM 10833 / BCRC 13528 / IAM 13628 / NBRC 14792 / USDA 110), this protein is Small ribosomal subunit protein uS3.